We begin with the raw amino-acid sequence, 886 residues long: Isoleucine--tRNA ligase (886 aa).

Residues 60–70 (PYANGDIHIGH) carry the 'HIGH' region motif. Glu-546 lines the L-isoleucyl-5'-AMP pocket. The 'KMSKS' region motif lies at 587–591 (KMSKS). Position 590 (Lys-590) interacts with ATP. The Zn(2+) site is built by Cys-856, Cys-859, Cys-870, and Cys-873.

This sequence belongs to the class-I aminoacyl-tRNA synthetase family. IleS type 1 subfamily. In terms of assembly, monomer. The cofactor is Zn(2+).

It is found in the cytoplasm. It carries out the reaction tRNA(Ile) + L-isoleucine + ATP = L-isoleucyl-tRNA(Ile) + AMP + diphosphate. Functionally, catalyzes the attachment of isoleucine to tRNA(Ile). As IleRS can inadvertently accommodate and process structurally similar amino acids such as valine, to avoid such errors it has two additional distinct tRNA(Ile)-dependent editing activities. One activity is designated as 'pretransfer' editing and involves the hydrolysis of activated Val-AMP. The other activity is designated 'posttransfer' editing and involves deacylation of mischarged Val-tRNA(Ile). The protein is Isoleucine--tRNA ligase of Mesomycoplasma hyopneumoniae (strain 7448) (Mycoplasma hyopneumoniae).